The chain runs to 400 residues: Argininosuccinate synthase (400 aa).

Residues 6 to 14 (AYSGGLDTS) and alanine 33 contribute to the ATP site. L-citrulline-binding residues include tyrosine 84 and serine 89. Position 114 (glycine 114) interacts with ATP. The L-aspartate site is built by threonine 116, asparagine 120, and aspartate 121. Position 120 (asparagine 120) interacts with L-citrulline. 5 residues coordinate L-citrulline: arginine 124, serine 173, serine 182, glutamate 258, and tyrosine 270.

The protein belongs to the argininosuccinate synthase family. Type 1 subfamily. In terms of assembly, homotetramer.

The protein localises to the cytoplasm. The catalysed reaction is L-citrulline + L-aspartate + ATP = 2-(N(omega)-L-arginino)succinate + AMP + diphosphate + H(+). It functions in the pathway amino-acid biosynthesis; L-arginine biosynthesis; L-arginine from L-ornithine and carbamoyl phosphate: step 2/3. This is Argininosuccinate synthase from Thermus thermophilus (strain ATCC BAA-163 / DSM 7039 / HB27).